Here is a 180-residue protein sequence, read N- to C-terminus: Cytokinin-beta-glucosidase 1 (180 aa).

Hydrolyzes cytokinin glucosides thus liberating free cytokinins. The sequence is that of Cytokinin-beta-glucosidase 1 (ROLC1) from Panax ginseng (Korean ginseng).